Consider the following 114-residue polypeptide: FK506-binding protein 1 (114 aa).

One can recognise a PPIase FKBP-type domain in the interval 26–114; it reads GDLVTIHYTG…IFEVELLKVN (89 aa).

It belongs to the FKBP-type PPIase family. FKBP1 subfamily.

It is found in the cytoplasm. The catalysed reaction is [protein]-peptidylproline (omega=180) = [protein]-peptidylproline (omega=0). With respect to regulation, inhibited by both FK506 and rapamycin. In terms of biological role, PPIases accelerate the folding of proteins. It catalyzes the cis-trans isomerization of proline imidic peptide bonds in oligopeptides. In Eremothecium gossypii (strain ATCC 10895 / CBS 109.51 / FGSC 9923 / NRRL Y-1056) (Yeast), this protein is FK506-binding protein 1 (FPR1).